The primary structure comprises 105 residues: Small ribosomal subunit protein uS14m (105 aa).

Belongs to the universal ribosomal protein uS14 family. As to quaternary structure, component of the mitochondrial small ribosomal subunit (mt-SSU). Mature yeast 74S mitochondrial ribosomes consist of a small (37S) and a large (54S) subunit. The 37S small subunit contains a 15S ribosomal RNA (15S mt-rRNA) and at least 32 different proteins. The 54S large subunit contains a 21S rRNA (21S mt-rRNA) and at least 45 different proteins.

It is found in the mitochondrion. In terms of biological role, component of the mitochondrial ribosome (mitoribosome), a dedicated translation machinery responsible for the synthesis of mitochondrial genome-encoded proteins, including at least some of the essential transmembrane subunits of the mitochondrial respiratory chain. The mitoribosomes are attached to the mitochondrial inner membrane and translation products are cotranslationally integrated into the membrane. In Schizosaccharomyces pombe (strain 972 / ATCC 24843) (Fission yeast), this protein is Small ribosomal subunit protein uS14m (mrp2).